Here is a 440-residue protein sequence, read N- to C-terminus: Chromosome partition protein MukF (440 aa).

A leucine-zipper region spans residues 208–236 (LSETSGTLRELQDTLEAAGDKLQANLLRI).

This sequence belongs to the MukF family. Interacts, and probably forms a ternary complex, with MukE and MukB via its C-terminal region. The complex formation is stimulated by calcium or magnesium. It is required for an interaction between MukE and MukB.

The protein resides in the cytoplasm. It is found in the nucleoid. Functionally, involved in chromosome condensation, segregation and cell cycle progression. May participate in facilitating chromosome segregation by condensation DNA from both sides of a centrally located replisome during cell division. Not required for mini-F plasmid partitioning. Probably acts via its interaction with MukB and MukE. Overexpression results in anucleate cells. It has a calcium binding activity. This Escherichia coli O17:K52:H18 (strain UMN026 / ExPEC) protein is Chromosome partition protein MukF.